We begin with the raw amino-acid sequence, 384 residues long: GTPase Obg (384 aa).

In terms of domain architecture, Obg spans 1–159 (MKFIDEAKIE…RSLQLELKVL (159 aa)). 2 disordered regions span residues 20-46 (ATSFRREKFVPRGGPDGGDGGKGGSVW) and 129-149 (HFKSSVNRAPKQSTPGEEGET). Residues 33–43 (GPDGGDGGKGG) show a composition bias toward gly residues. Residues 130–143 (FKSSVNRAPKQSTP) show a composition bias toward polar residues. One can recognise an OBG-type G domain in the interval 160 to 348 (ADVGLLGMPN…LVHQINQYLA (189 aa)). GTP-binding positions include 166-173 (GMPNAGKS), 191-195 (FTTLH), 213-216 (DIPG), 284-287 (NKLD), and 329-331 (SAL). Mg(2+) is bound by residues S173 and T193.

It belongs to the TRAFAC class OBG-HflX-like GTPase superfamily. OBG GTPase family. As to quaternary structure, monomer. Mg(2+) is required as a cofactor.

The protein localises to the cytoplasm. Its function is as follows. An essential GTPase which binds GTP, GDP and possibly (p)ppGpp with moderate affinity, with high nucleotide exchange rates and a fairly low GTP hydrolysis rate; the half-life of the GTP-bound state is about 50 minutes. Plays a role in control of the cell cycle, stress response, ribosome biogenesis and in those bacteria that undergo differentiation, in morphogenesis control. This chain is GTPase Obg, found in Neisseria gonorrhoeae (strain ATCC 700825 / FA 1090).